Consider the following 182-residue polypeptide: Mitochondrial FAD-linked sulfhydryl oxidase erv1 (182 aa).

In terms of domain architecture, ERV/ALR sulfhydryl oxidase spans 75-177 (RLPDVAELGR…FNCQVWSKKA (103 aa)). Residues 81 to 87 (ELGRSTW), histidine 91, and tyrosine 120 contribute to the FAD site. 2 disulfide bridges follow: cysteine 122-cysteine 125 and cysteine 153-cysteine 170. Residues 153–165 (CEAHNDVNERLGK) and 176–177 (KA) each bind FAD.

FAD serves as cofactor.

It localises to the mitochondrion intermembrane space. The catalysed reaction is 2 R'C(R)SH + O2 = R'C(R)S-S(R)CR' + H2O2. Functionally, FAD-dependent sulfhydryl oxidase that catalyzes disulfide bond formation. Required for the import and folding of small cysteine-containing proteins in the mitochondrial intermembrane space (IMS). The protein is Mitochondrial FAD-linked sulfhydryl oxidase erv1 (erv1) of Schizosaccharomyces pombe (strain 972 / ATCC 24843) (Fission yeast).